The following is a 179-amino-acid chain: Altered inheritance of mitochondria protein 11 (179 aa).

2 helical membrane-spanning segments follow: residues 56–78 (MLRFFGATAFTLLSARLAFRGTI) and 105–127 (AFAYGSGLATGGFAMLILGTCWL).

The protein belongs to the AIM11 family.

Its subcellular location is the membrane. This is Altered inheritance of mitochondria protein 11 (AIM11) from Eremothecium gossypii (strain ATCC 10895 / CBS 109.51 / FGSC 9923 / NRRL Y-1056) (Yeast).